A 299-amino-acid polypeptide reads, in one-letter code: NAD kinase (299 aa).

The active-site Proton acceptor is the Asp78. Residues 78–79, 151–152, Lys162, Arg179, Asp181, 192–197, and Gln252 each bind NAD(+); these read DG, ND, and TAYALS.

This sequence belongs to the NAD kinase family. The cofactor is a divalent metal cation.

Its subcellular location is the cytoplasm. The catalysed reaction is NAD(+) + ATP = ADP + NADP(+) + H(+). Functionally, involved in the regulation of the intracellular balance of NAD and NADP, and is a key enzyme in the biosynthesis of NADP. Catalyzes specifically the phosphorylation on 2'-hydroxyl of the adenosine moiety of NAD to yield NADP. The chain is NAD kinase from Coxiella burnetii (strain CbuG_Q212) (Coxiella burnetii (strain Q212)).